Reading from the N-terminus, the 311-residue chain is MTFSHRPVMPAEVLEYLSPRPGGVYVDGTLGGAGHARLILEATSPDGMLIGFDRDPAALEVARERLALFGERFRPVPGNFSEMGRVLAELGVDGVDGFLLDVGVSSHQLDTAERGFSFLTDAPLDMRMNTLVPGTAADLVNDLNEHELARIIKEYGEERWARRIASFIVKARVDGPIERTLQLVDIIKGAIPRGAWEERIHPATRTFQALRIAVNDELGSLERGLESALGLLRPGGRGVVISFHSLEDRIVKTMFRRYAQGCTCPKELPRCVCGGVPRLRILTGRPVVAGDVEVAENPRARSAKLRAAEKL.

S-adenosyl-L-methionine is bound by residues 33 to 35, D53, F80, D101, and Q108; that span reads AGH.

This sequence belongs to the methyltransferase superfamily. RsmH family.

The protein resides in the cytoplasm. The catalysed reaction is cytidine(1402) in 16S rRNA + S-adenosyl-L-methionine = N(4)-methylcytidine(1402) in 16S rRNA + S-adenosyl-L-homocysteine + H(+). Its function is as follows. Specifically methylates the N4 position of cytidine in position 1402 (C1402) of 16S rRNA. In Geobacter sulfurreducens (strain ATCC 51573 / DSM 12127 / PCA), this protein is Ribosomal RNA small subunit methyltransferase H.